Reading from the N-terminus, the 325-residue chain is MLPTLTALLCLGLCLSQRINTEKETLPKPIIWAKPSIMVTNGNSVNIWCQGAQSASEYQLYFEGSFFALERPKPSRSMNKVRFFISQMTSHTAGIYTCFYQSGELWSKSSNPLKLVVTGLYDTPNLWVYPRPEVTLGENVTFFCQLKTATSKFFLLKERGSNHIQNKYGNIQAEFPMGPVTRAHRGTYRCFGSYNDYAWSFPSEPVTLLITGGVENSSLAPTDPTSSLDYWEFDLSTNESGLQKDSAFWDHTTQNLIRIGLACIILITLVWLLTEDWLSKRKDHEEANRLTNWECRRRWRMQHYFEEEQRNAISMMELKATPGAL.

Residues 1–16 form the signal peptide; sequence MLPTLTALLCLGLCLS. At 17–255 the chain is on the extracellular side; the sequence is QRINTEKETL…SAFWDHTTQN (239 aa). 2 Ig-like domains span residues 34 to 118 and 129 to 211; these read KPSI…LVVT and YPRP…LLIT. Cys-49 and Cys-98 are joined by a disulfide. Residue Asn-139 is glycosylated (N-linked (GlcNAc...) asparagine). The cysteines at positions 144 and 190 are disulfide-linked. N-linked (GlcNAc...) asparagine glycosylation is found at Asn-216 and Asn-238. The chain crosses the membrane as a helical span at residues 256–273; that stretch reads LIRIGLACIILITLVWLL. Topologically, residues 274–325 are cytoplasmic; sequence TEDWLSKRKDHEEANRLTNWECRRRWRMQHYFEEEQRNAISMMELKATPGAL.

It belongs to the natural cytotoxicity receptor (NCR) family. As to quaternary structure, interacts with CD3Z and FCER1G. As to expression, selectively expressed by NK cells.

The protein resides in the cell membrane. Cytotoxicity-activating receptor that may contribute to the increased efficiency of activated natural killer (NK) cells to mediate tumor cell lysis. This chain is Natural cytotoxicity triggering receptor 1 (Ncr1), found in Mus musculus (Mouse).